The following is a 283-amino-acid chain: Trafficking protein particle complex subunit 31 (283 aa).

The span at 1-16 (MSQRIIQPSASDQQFP) shows a compositional bias: polar residues. Disordered stretches follow at residues 1-20 (MSQR…GKSD) and 126-156 (SSKL…RLQE). Over residues 126–151 (SSKLSNASNSPGMLANSSTATSASAN) the composition is skewed to low complexity.

It belongs to the TRAPP small subunits family. BET3 subfamily. Part of the multisubunit TRAPP (transport protein particle) I complex composed of BET3, BET5, TRS20, TRS23, TRS31 and TRS33. Part of the multisubunit TRAPP (transport protein particle) II complex composed of BET3, BET5, TRS20, TRS23, TRS31, TRS33, TRS65, TRS85, TRS120 and TRS130. Part of the multisubunit TRAPP (transport protein particle) III complex composed of BET3, BET5, TRS20, TRS23, TRS31, TRS33 and TRS85.

It is found in the golgi apparatus. Its subcellular location is the cis-Golgi network. The protein localises to the endoplasmic reticulum. It localises to the preautophagosomal structure. In terms of biological role, component of the TRAPP I, TRAPP II and TRAPP III complexes which act as guanine nucleotide exchange factors (GEF) for YPT1. TRAPP I plays a key role in the late stages of endoplasmic reticulum to Golgi traffic. TRAPP II plays a role in intra-Golgi transport. TRAPP III plays a role in autophagosome formation. This is Trafficking protein particle complex subunit 31 (TRS31) from Saccharomyces cerevisiae (strain ATCC 204508 / S288c) (Baker's yeast).